The following is a 376-amino-acid chain: Succinyl-diaminopimelate desuccinylase (376 aa).

Histidine 66 provides a ligand contact to Zn(2+). Aspartate 68 is a catalytic residue. A Zn(2+)-binding site is contributed by aspartate 99. The active-site Proton acceptor is the glutamate 133. Residues glutamate 134, glutamate 162, and histidine 348 each contribute to the Zn(2+) site.

This sequence belongs to the peptidase M20A family. DapE subfamily. Homodimer. Zn(2+) serves as cofactor. It depends on Co(2+) as a cofactor.

It carries out the reaction N-succinyl-(2S,6S)-2,6-diaminopimelate + H2O = (2S,6S)-2,6-diaminopimelate + succinate. Its pathway is amino-acid biosynthesis; L-lysine biosynthesis via DAP pathway; LL-2,6-diaminopimelate from (S)-tetrahydrodipicolinate (succinylase route): step 3/3. Its function is as follows. Catalyzes the hydrolysis of N-succinyl-L,L-diaminopimelic acid (SDAP), forming succinate and LL-2,6-diaminopimelate (DAP), an intermediate involved in the bacterial biosynthesis of lysine and meso-diaminopimelic acid, an essential component of bacterial cell walls. This Xanthomonas euvesicatoria pv. vesicatoria (strain 85-10) (Xanthomonas campestris pv. vesicatoria) protein is Succinyl-diaminopimelate desuccinylase.